The following is a 453-amino-acid chain: Ribulose bisphosphate carboxylase large chain (453 aa).

The propeptide occupies 1–2 (MS). The residue at position 3 (Pro3) is an N-acetylproline. An N6,N6,N6-trimethyllysine modification is found at Lys14. 2 residues coordinate substrate: Asn123 and Thr173. Catalysis depends on Lys175, which acts as the Proton acceptor. Lys177 contributes to the substrate binding site. 3 residues coordinate Mg(2+): Lys201, Asp203, and Glu204. Lys201 carries the N6-carboxylysine modification. Catalysis depends on His294, which acts as the Proton acceptor. The substrate site is built by Arg295, His327, and Ser379.

Belongs to the RuBisCO large chain family. Type I subfamily. Heterohexadecamer of 8 large chains and 8 small chains; disulfide-linked. The disulfide link is formed within the large subunit homodimers. Requires Mg(2+) as cofactor. Post-translationally, the disulfide bond which can form in the large chain dimeric partners within the hexadecamer appears to be associated with oxidative stress and protein turnover.

Its subcellular location is the plastid. The protein localises to the chloroplast. It carries out the reaction 2 (2R)-3-phosphoglycerate + 2 H(+) = D-ribulose 1,5-bisphosphate + CO2 + H2O. The catalysed reaction is D-ribulose 1,5-bisphosphate + O2 = 2-phosphoglycolate + (2R)-3-phosphoglycerate + 2 H(+). RuBisCO catalyzes two reactions: the carboxylation of D-ribulose 1,5-bisphosphate, the primary event in carbon dioxide fixation, as well as the oxidative fragmentation of the pentose substrate in the photorespiration process. Both reactions occur simultaneously and in competition at the same active site. In Crucianella angustifolia (Narrow-leaved crosswort), this protein is Ribulose bisphosphate carboxylase large chain.